A 963-amino-acid chain; its full sequence is IQ motif and SEC7 domain-containing protein 1 (963 aa).

Residues 21–88 (SGVEGEAPSS…TRRPKLQHST (68 aa)) form a disordered region. A compositionally biased stretch (polar residues) spans 29-38 (SSETGTSLDS). Phosphoserine is present on residues S89, S105, and S107. Residues 134–163 (TRHAARTIQTAFRQYQMNKNFERLRSSMSE) form the IQ domain. Residues S180, S249, and S253 each carry the phosphoserine modification. 2 disordered regions span residues 312-332 (LSPP…ESDL) and 349-513 (KEDK…RNSW). Composition is skewed to basic and acidic residues over residues 366–376 (ERQEQRLRVEH) and 430–446 (LPRE…RPLD). The segment covering 471 to 489 (DSINSTSNSNDTINCSSES) has biased composition (low complexity). Phosphoserine occurs at positions 512 and 515. Residues 517–710 (AFSNDVIRKR…MGIYERIRKR (194 aa)) form the SEC7 domain. Positions 774–866 (HQREIFLFND…LRESIAEVQE (93 aa)) constitute a PH domain. Positions 848-879 (QDRKKFTDDLRESIAEVQEMEKHRIESELEKQ) form a coiled coil. S892 bears the Phosphoserine mark. A Phosphotyrosine modification is found at Y911. The tract at residues 922–947 (LSSSLRDLSEAGKRGRRSSAGSLESN) is disordered. Residues S924 and S925 each carry the phosphoserine modification.

Belongs to the BRAG family. In terms of assembly, interacts with ARF1 and ARF6. Interacts with GRIA2; the interaction is required for ARF6 activation. As to expression, expressed in brain, ovary, heart, lung, liver, kidney and leukocytes. Moderate expression was also detected in lung, skeletal muscle, placenta, small intestine, pancreas, spleen and testis.

It localises to the cytoplasm. The protein resides in the nucleus. The protein localises to the postsynaptic density. It is found in the cytoplasmic vesicle. Its subcellular location is the secretory vesicle. It localises to the synaptic vesicle. In terms of biological role, guanine nucleotide exchange factor for ARF1 and ARF6. Guanine nucleotide exchange factor activity is enhanced by lipid binding. Accelerates GTP binding by ARFs of all three classes. Guanine nucleotide exchange protein for ARF6, mediating internalization of beta-1 integrin. Involved in neuronal development. In neurons, plays a role in the control of vesicle formation by endocytoc cargo. Upon long term depression, interacts with GRIA2 and mediates the activation of ARF6 to internalize synaptic AMPAR receptors. The polypeptide is IQ motif and SEC7 domain-containing protein 1 (Homo sapiens (Human)).